The sequence spans 585 residues: MSKVAKQYAGAQVYGRLLSYLKPLWKVFALAVLGNVIYALASAAMADATKYIVAAIETPSPEGRLLVPMLIIGIFALRGLGSFCGGYFMARVARGIVHRMRLELFRHLTVLPCRFFDSNSTGHLVSRITYNVDQVTGAATNAITVVLREGFTVIGLMGYMIYVSWKLTLLFLVLGPIIGVLIGYVSKRFRRISRRIQSSMGDVTHVASESIGGYRVMRTFGGEEYEFNRFMKASEYNITQALKMSLTQALSTPIIQLVISVFIALLVWLALSPEVRGNMSTGEFLAYITAATTCAKPIRQLTEVNAVIQRGISAAQDVFMQLDEPVEKDEGSYVADRVQGRLEFKSLGFAYSDEGKPALQEINLVIEPGETVALVGRSGSGKSTLVNLLPRFYDYEQGEILLDGKPLKDFALTSLRRQISIVTQQVVLFNDTVTNNIAYGALADATPEQVREAAKSADALGFIEQLEQGFDTLLGENGTRLSGGQRQRMVIARALLKDSPILILDEATSALDTHAERNIQSALETLMKGRTTLVVAHRLSTIENADKIVVMDQGRIVEVGSHRELIEKDGAYAALHKLQFSEADA.

5 helical membrane-spanning segments follow: residues 24-44, 65-85, 143-163, 165-185, and 253-273; these read LWKV…ASAA, LLVP…SFCG, ITVV…MIYV, WKLT…IGYV, and PIIQ…ALSP. One can recognise an ABC transmembrane type-1 domain in the interval 29-310; sequence ALAVLGNVIY…LTEVNAVIQR (282 aa). The ABC transporter domain occupies 342 to 578; sequence LEFKSLGFAY…DGAYAALHKL (237 aa). An ATP-binding site is contributed by 376 to 383; it reads GRSGSGKS.

Belongs to the ABC transporter superfamily. Lipid exporter (TC 3.A.1.106) family. Homodimer.

It localises to the cell inner membrane. It carries out the reaction ATP + H2O + lipid A-core oligosaccharideSide 1 = ADP + phosphate + lipid A-core oligosaccharideSide 2.. In terms of biological role, involved in lipopolysaccharide (LPS) biosynthesis. Translocates lipid A-core from the inner to the outer leaflet of the inner membrane. Transmembrane domains (TMD) form a pore in the inner membrane and the ATP-binding domain (NBD) is responsible for energy generation. This chain is ATP-dependent lipid A-core flippase, found in Hahella chejuensis (strain KCTC 2396).